A 254-amino-acid chain; its full sequence is MNRRRRIYEGKAKILYEGPEPGTLIQFFKDDATAFNKKKHDVIDGKGVLNNRISEYIFTHLNKIGIPTHFIRRLNMREQLIKEVEIIPLEIVVRNVAAGSLSKRLGIEEGTVLPRSIIEFYYKADALDDPMVSEEHITAFGWASPQELDDIMALAIRINDFLSGLFLGVGIQLVDFKIECGRLYEGDMMRIILADEISPDSCRLWDIETKEKMDKDRFRRDMGGLVEAYQEVARRLGIINENEPPRGSGPVLVK.

This sequence belongs to the SAICAR synthetase family.

It carries out the reaction 5-amino-1-(5-phospho-D-ribosyl)imidazole-4-carboxylate + L-aspartate + ATP = (2S)-2-[5-amino-1-(5-phospho-beta-D-ribosyl)imidazole-4-carboxamido]succinate + ADP + phosphate + 2 H(+). The protein operates within purine metabolism; IMP biosynthesis via de novo pathway; 5-amino-1-(5-phospho-D-ribosyl)imidazole-4-carboxamide from 5-amino-1-(5-phospho-D-ribosyl)imidazole-4-carboxylate: step 1/2. The chain is Phosphoribosylaminoimidazole-succinocarboxamide synthase from Sinorhizobium medicae (strain WSM419) (Ensifer medicae).